The primary structure comprises 548 residues: T-complex protein 1 subunit theta (548 aa).

The tract at residues Ala-528–Ala-548 is disordered.

The protein belongs to the TCP-1 chaperonin family. Heterooligomeric complex.

It localises to the cytoplasm. Molecular chaperone; assists the folding of proteins upon ATP hydrolysis. Known to play a role, in vitro, in the folding of actin and tubulin. Required for correct subcellular localization of pgl-1. The protein is T-complex protein 1 subunit theta of Caenorhabditis briggsae.